The chain runs to 150 residues: Large ribosomal subunit protein uL13 (150 aa).

Belongs to the universal ribosomal protein uL13 family. In terms of assembly, part of the 50S ribosomal subunit.

Its function is as follows. This protein is one of the early assembly proteins of the 50S ribosomal subunit, although it is not seen to bind rRNA by itself. It is important during the early stages of 50S assembly. This chain is Large ribosomal subunit protein uL13, found in Chlorobaculum parvum (strain DSM 263 / NCIMB 8327) (Chlorobium vibrioforme subsp. thiosulfatophilum).